A 360-amino-acid polypeptide reads, in one-letter code: Ferredoxin--NADP reductase 1 (360 aa).

The FAD site is built by D43, Q51, Y56, A96, F141, D307, and S348.

The protein belongs to the ferredoxin--NADP reductase type 2 family. As to quaternary structure, homodimer. The cofactor is FAD.

The enzyme catalyses 2 reduced [2Fe-2S]-[ferredoxin] + NADP(+) + H(+) = 2 oxidized [2Fe-2S]-[ferredoxin] + NADPH. This Cupriavidus taiwanensis (strain DSM 17343 / BCRC 17206 / CCUG 44338 / CIP 107171 / LMG 19424 / R1) (Ralstonia taiwanensis (strain LMG 19424)) protein is Ferredoxin--NADP reductase 1.